A 312-amino-acid chain; its full sequence is Large ribosomal subunit protein uL10 (312 aa).

Residue K14 forms a Glycyl lysine isopeptide (Lys-Gly) (interchain with G-Cter in ubiquitin) linkage. Phosphoserine is present on S68. Residues K97 and K144 each participate in a glycyl lysine isopeptide (Lys-Gly) (interchain with G-Cter in ubiquitin) cross-link. Positions 199–230 are interaction with P1A-P2B; it reads SSILDITDEELVSHFVSAVSTIASISLAIGYP. The segment at 231–258 is interaction with P1B-P2A; the sequence is TLPSVGHTLINNYKDLLAVAIAASYHYP. Positions 278–293 are enriched in low complexity; the sequence is PAATSAASGDAAPAEE. Residues 278-312 are disordered; that stretch reads PAATSAASGDAAPAEEAAAEEEEESDDDMGFGLFD. A compositionally biased stretch (acidic residues) spans 294-306; the sequence is AAAEEEEESDDDM. S302 carries the post-translational modification Phosphoserine; by CK2.

The protein belongs to the universal ribosomal protein uL10 family. In terms of assembly, component of the large ribosomal subunit (LSU). Mature yeast ribosomes consist of a small (40S) and a large (60S) subunit. The 40S small subunit contains 1 molecule of ribosomal RNA (18S rRNA) and 33 different proteins (encoded by 57 genes). The large 60S subunit contains 3 rRNA molecules (25S, 5.8S and 5S rRNA) and 46 different proteins (encoded by 81 genes). The 5 acidic ribosomal P-proteins form the stalk structure of the 60S subunit. They are organized as a pentameric complex in which uL10/P0 interacts with 2 heterodimers, P1A-P2B and P1B-P2A. uL10 directly interacts with 28S rRNA. uL10 interacts with YFL034W.

It localises to the cytoplasm. Component of the ribosome, a large ribonucleoprotein complex responsible for the synthesis of proteins in the cell. The small ribosomal subunit (SSU) binds messenger RNAs (mRNAs) and translates the encoded message by selecting cognate aminoacyl-transfer RNA (tRNA) molecules. The large subunit (LSU) contains the ribosomal catalytic site termed the peptidyl transferase center (PTC), which catalyzes the formation of peptide bonds, thereby polymerizing the amino acids delivered by tRNAs into a polypeptide chain. The nascent polypeptides leave the ribosome through a tunnel in the LSU and interact with protein factors that function in enzymatic processing, targeting, and the membrane insertion of nascent chains at the exit of the ribosomal tunnel. uL10 forms part of the P stalk that participates in recruiting G proteins to the ribosome. The chain is Large ribosomal subunit protein uL10 from Saccharomyces cerevisiae (strain ATCC 204508 / S288c) (Baker's yeast).